A 141-amino-acid polypeptide reads, in one-letter code: Hemoglobin subunit alpha-D (141 aa).

Residues 1–141 (MLSADDKKII…VAAVLAEKYR (141 aa)) enclose the Globin domain. 2 residues coordinate heme b: His-58 and His-87.

The protein belongs to the globin family. Heterotetramer of two alpha-D chains and two beta chains. In terms of tissue distribution, red blood cells.

Involved in oxygen transport from the lung to the various peripheral tissues. The protein is Hemoglobin subunit alpha-D (HBAD) of Anser indicus (Bar-headed goose).